The following is a 162-amino-acid chain: Ribosome maturation factor RimP (162 aa).

It belongs to the RimP family.

Its subcellular location is the cytoplasm. Required for maturation of 30S ribosomal subunits. The polypeptide is Ribosome maturation factor RimP (Cupriavidus necator (strain ATCC 17699 / DSM 428 / KCTC 22496 / NCIMB 10442 / H16 / Stanier 337) (Ralstonia eutropha)).